A 404-amino-acid chain; its full sequence is Endophilin-B2 (404 aa).

Met-1 bears the N-acetylmethionine mark. Residues 1–27 form a membrane-binding amphipathic helix region; it reads MDFNMKKLASDAGIFFTRAVQFTEEKF. At Ser-10 the chain carries Phosphoserine. The BAR domain maps to 24–291; it reads EEKFGQAEKT…LGSSQGAIFP (268 aa). The stretch at 209–239 forms a coiled coil; it reads SASALWNDEVDKAEQELRAAQTEFDRQAEVT. One can recognise an SH3 domain in the interval 344-404; sequence SGTRKARVLY…VPVTYLELLS (61 aa). Ser-404 bears the Phosphoserine mark.

The protein belongs to the endophilin family. In terms of assembly, homodimer, and heterodimer with SH3GLB1.

The protein resides in the cytoplasm. The sequence is that of Endophilin-B2 from Rattus norvegicus (Rat).